Reading from the N-terminus, the 401-residue chain is Glucose/mannose transporter GlcP (401 aa).

Transmembrane regions (helical) follow at residues 11-31 (AFFF…PFLL), 43-63 (VIIF…PLMI), 78-98 (IMLV…IIVM), 99-119 (AFLL…FVIA), 132-152 (EVLF…FIDI), 156-176 (FLPY…WLIF), 212-232 (LGFF…FANF), 247-267 (LISV…IGFV), 278-298 (LFSC…SNPI), 306-326 (LIGL…SIII), 336-356 (LFIA…GWSL), and 360-380 (TILL…GISV).

The protein belongs to the major facilitator superfamily.

Its subcellular location is the cell membrane. Its function is as follows. Can transport glucose, mannose, 2-deoxyglucose and methyl alpha-glucoside, but not galactose. This chain is Glucose/mannose transporter GlcP (glcP), found in Bacillus subtilis (strain 168).